Here is an 860-residue protein sequence, read N- to C-terminus: DDB1- and CUL4-associated factor 6 (860 aa).

WD repeat units follow at residues 49 to 88 (VHDGCVNTICWNDTGEYILSGSDDTKLVISNPYSRKVLTT), 92 to 133 (GHRA…ETNR), 139 to 179 (CHYG…SCTK), 189 to 229 (NCRR…TRAT), and 251 to 290 (NKSCRVTSLCYSEDGQEILVSYSSDYIYLFDPKDDTAREL). 2 stretches are compositionally biased toward basic and acidic residues: residues 288–303 (RELKTPSAEERREELR) and 312–334 (LRGDWSDTGPRARPESERERDGE). Disordered regions lie at residues 288-340 (RELK…PNVS), 355-392 (EASEVAQSNRGRGRSRPRGGTSQSDISTLPTVPSSPDL), 407-490 (QFLQ…TTST), and 502-675 (IASS…GPGD). Position 336 is a phosphoserine (Ser336). Composition is skewed to polar residues over residues 379–388 (DISTLPTVPS) and 409–421 (LQPSTSSTMSAQA). Low complexity predominate over residues 422 to 441 (HSTSSPTESPHSTPLLSSPD). Basic and acidic residues predominate over residues 457–467 (HQSDNNNEKLS). A compositionally biased stretch (polar residues) spans 480 to 490 (HYSTEGTTTST). Over residues 502–511 (IASSSRGIGS) the composition is skewed to low complexity. The segment covering 535 to 549 (SETKAPEESSEDVTK) has biased composition (basic and acidic residues). Residues 614–626 (TSTESATNENNTN) show a composition bias toward low complexity. Residues 627-636 (PEPQFQTEAT) are compositionally biased toward polar residues. Position 649 is a phosphoserine (Ser649). Position 654 is a phosphothreonine (Thr654). Phosphoserine is present on Ser657. Positions 676–705 (RRSAVARIQEFFRRRKERKEMEELDTLNIR) constitute an IQ domain. 2 WD repeats span residues 718-756 (NSRTMIKEANFWGANFVMSGSDCGHIFIWDRHTAEHLML) and 759-798 (ADNHVVNCLQPHPFDPILASSGIDYDIKIWSPLEESRIFN). Phosphoserine occurs at positions 847 and 850.

As to quaternary structure, interacts with the nuclear receptors NR3C1 and AR in the presence of ligand. Interacts with DDB1, CUL4A and CUL4B. In terms of tissue distribution, highly expressed in skeletal muscle and testis. Expressed to a lesser degree in heart, prostate, and adrenal gland.

Its subcellular location is the nucleus. The protein operates within protein modification; protein ubiquitination. Functionally, ligand-dependent coactivator of nuclear receptors. Enhance transcriptional activity of the nuclear receptors NR3C1 and AR. May function as a substrate receptor for CUL4-DDB1 E3 ubiquitin-protein ligase complex. This Homo sapiens (Human) protein is DDB1- and CUL4-associated factor 6 (DCAF6).